The chain runs to 260 residues: tRNA1(Val) (adenine(37)-N6)-methyltransferase (260 aa).

It belongs to the methyltransferase superfamily. tRNA (adenine-N(6)-)-methyltransferase family.

It is found in the cytoplasm. It carries out the reaction adenosine(37) in tRNA1(Val) + S-adenosyl-L-methionine = N(6)-methyladenosine(37) in tRNA1(Val) + S-adenosyl-L-homocysteine + H(+). Functionally, specifically methylates the adenine in position 37 of tRNA(1)(Val) (anticodon cmo5UAC). The chain is tRNA1(Val) (adenine(37)-N6)-methyltransferase from Serratia proteamaculans (strain 568).